Here is a 72-residue protein sequence, read N- to C-terminus: Translation initiation factor IF-1 (72 aa).

One can recognise an S1-like domain in the interval methionine 1–lysine 72.

The protein belongs to the IF-1 family. As to quaternary structure, component of the 30S ribosomal translation pre-initiation complex which assembles on the 30S ribosome in the order IF-2 and IF-3, IF-1 and N-formylmethionyl-tRNA(fMet); mRNA recruitment can occur at any time during PIC assembly.

It is found in the cytoplasm. One of the essential components for the initiation of protein synthesis. Stabilizes the binding of IF-2 and IF-3 on the 30S subunit to which N-formylmethionyl-tRNA(fMet) subsequently binds. Helps modulate mRNA selection, yielding the 30S pre-initiation complex (PIC). Upon addition of the 50S ribosomal subunit IF-1, IF-2 and IF-3 are released leaving the mature 70S translation initiation complex. The chain is Translation initiation factor IF-1 from Streptococcus gordonii (strain Challis / ATCC 35105 / BCRC 15272 / CH1 / DL1 / V288).